Here is a 432-residue protein sequence, read N- to C-terminus: Enolase (432 aa).

Position 167 (Gln-167) interacts with (2R)-2-phosphoglycerate. The active-site Proton donor is Glu-209. 3 residues coordinate Mg(2+): Asp-246, Glu-290, and Asp-317. (2R)-2-phosphoglycerate contacts are provided by Lys-342, Arg-371, Ser-372, and Lys-393. Catalysis depends on Lys-342, which acts as the Proton acceptor.

Belongs to the enolase family. As to quaternary structure, component of the RNA degradosome, a multiprotein complex involved in RNA processing and mRNA degradation. It depends on Mg(2+) as a cofactor.

The protein resides in the cytoplasm. The protein localises to the secreted. It localises to the cell surface. The enzyme catalyses (2R)-2-phosphoglycerate = phosphoenolpyruvate + H2O. It participates in carbohydrate degradation; glycolysis; pyruvate from D-glyceraldehyde 3-phosphate: step 4/5. Catalyzes the reversible conversion of 2-phosphoglycerate (2-PG) into phosphoenolpyruvate (PEP). It is essential for the degradation of carbohydrates via glycolysis. The sequence is that of Enolase from Salmonella dublin (strain CT_02021853).